Consider the following 188-residue polypeptide: Elongation factor P-like protein (188 aa).

Belongs to the elongation factor P family.

This chain is Elongation factor P-like protein, found in Xylella fastidiosa (strain 9a5c).